A 473-amino-acid polypeptide reads, in one-letter code: Aspartyl/glutamyl-tRNA(Asn/Gln) amidotransferase subunit B (473 aa).

This sequence belongs to the GatB/GatE family. GatB subfamily. In terms of assembly, heterotrimer of A, B and C subunits.

It catalyses the reaction L-glutamyl-tRNA(Gln) + L-glutamine + ATP + H2O = L-glutaminyl-tRNA(Gln) + L-glutamate + ADP + phosphate + H(+). The catalysed reaction is L-aspartyl-tRNA(Asn) + L-glutamine + ATP + H2O = L-asparaginyl-tRNA(Asn) + L-glutamate + ADP + phosphate + 2 H(+). Its function is as follows. Allows the formation of correctly charged Asn-tRNA(Asn) or Gln-tRNA(Gln) through the transamidation of misacylated Asp-tRNA(Asn) or Glu-tRNA(Gln) in organisms which lack either or both of asparaginyl-tRNA or glutaminyl-tRNA synthetases. The reaction takes place in the presence of glutamine and ATP through an activated phospho-Asp-tRNA(Asn) or phospho-Glu-tRNA(Gln). The polypeptide is Aspartyl/glutamyl-tRNA(Asn/Gln) amidotransferase subunit B (Campylobacter hominis (strain ATCC BAA-381 / DSM 21671 / CCUG 45161 / LMG 19568 / NCTC 13146 / CH001A)).